An 88-amino-acid chain; its full sequence is MGINETMMFKVDNEKENEAKEILVSVHQALKEKGYNPINQMVGYILSGDPTYITNYKNARSIVRRLERDELLEEVLKFYLENHNNEPE.

This sequence belongs to the UPF0297 family.

This Ruminiclostridium cellulolyticum (strain ATCC 35319 / DSM 5812 / JCM 6584 / H10) (Clostridium cellulolyticum) protein is UPF0297 protein Ccel_2240.